The chain runs to 236 residues: E3 ubiquitin-protein ligase RNF187 (236 aa).

The RING-type zinc-finger motif lies at 12-53 (CALCQRAPREPVRADCGHRFCRACVVRFWAEEDGPFPCPECA). 2 positions are modified to asymmetric dimethylarginine; by PRMT1: R98 and R109. K195 participates in a covalent cross-link: Glycyl lysine isopeptide (Lys-Gly) (interchain with G-Cter in ubiquitin). S200 bears the Phosphoserine mark. Residues K224 and K225 each participate in a glycyl lysine isopeptide (Lys-Gly) (interchain with G-Cter in ubiquitin) cross-link.

Homodimer. Interacts with JUN, independently of JUN phosphorylation. Interacts (via C-terminus) with TRIM7. Ubiquitinated; undergoes 'Lys-48'-linked autoubiquitination in the absence of growth factors and MAP3K1-induced 'Lys-63'-linked polyubiquitination. 'Lys-48'-autoubiquitination leads to degradation by the proteasome, while MAP3K1-induced 'Lys-63'-linked polyubiquitination results in the stabilization of the protein. 'Lys-48'- and 'Lys-63'-linked polyubiquitinations occur most probably on the same 3 C-terminal lysine residues (Lys-195, Lys-224 and Lys-225) and are thus mutually exclusive. Other sites of ubiquitination are not excluded. 'Lys-63'-linked polyubiquitination by TRIM7 in response to growth factor signaling via the MEK/ERK pathway enhances protein stability. In terms of processing, arginine methylation by PRMT1 stabilizes RNF187 by facilitating K63-linked ubiquitin chain formation, and enables dimerization, c-Jun interaction and subsequent AP1 target gene expression.

Its subcellular location is the cytoplasm. The protein localises to the nucleus. It catalyses the reaction S-ubiquitinyl-[E2 ubiquitin-conjugating enzyme]-L-cysteine + [acceptor protein]-L-lysine = [E2 ubiquitin-conjugating enzyme]-L-cysteine + N(6)-ubiquitinyl-[acceptor protein]-L-lysine.. Its pathway is protein modification; protein ubiquitination. In terms of biological role, E3 ubiquitin-protein ligase that acts as a coactivator of JUN-mediated gene activation in response to growth factor signaling via the MAP3K1 pathway, independently from MAPK8. The chain is E3 ubiquitin-protein ligase RNF187 (Rnf187) from Mus musculus (Mouse).